The sequence spans 199 residues: V-set and transmembrane domain-containing protein 5 (199 aa).

The N-terminal stretch at 1-27 (MRPPRCVGRTQGIPLGLLAFWVATARC) is a signal peptide. The Extracellular segment spans residues 28 to 146 (LQSQGVSLYI…VSEIRYEDLH (119 aa)). One can recognise an Ig-like C2-type domain in the interval 36–138 (YIPRSAINAT…QSGTILLHVS (103 aa)). N-linked (GlcNAc...) asparagine glycans are attached at residues N43, N87, and N101. Residues 147–167 (FVAVFFALLAAVAVVLISLMW) traverse the membrane as a helical segment. Topologically, residues 168–199 (VCNQCAYKFQRKRRYKLRESTTEEIEMKDVEC) are cytoplasmic. Residues 169–185 (CNQCAYKFQRKRRYKLR) form an important for CDC42-dependent filopodia induction region.

As to quaternary structure, can homooligomerize through cis interactions within the same cell membrane. N-glycosylated.

It is found in the cell membrane. The protein resides in the cell projection. It localises to the dendrite. Its subcellular location is the axon. Functionally, cell adhesion-like membrane protein of the central nervous system (CNS) which modulates both the position and complexity of central neurons by altering their membrane morphology and dynamics. Involved in the formation of neuronal dendrites and protrusions including dendritic filopodia. In synaptogenesis, regulates synapse formation by altering dendritic spine morphology and actin distribution. Promotes formation of unstable neuronal spines such as thin and branched types. Regulates neuronal morphogenesis and migration during cortical development in the brain. The protein is V-set and transmembrane domain-containing protein 5 (Vstm5) of Rattus norvegicus (Rat).